The following is a 1162-amino-acid chain: DNA-directed RNA polymerase subunit beta 1 (1162 aa).

This sequence belongs to the RNA polymerase beta chain family. As to quaternary structure, the RNAP catalytic core consists of 2 alpha, 1 beta, 1 beta' and 1 omega subunit. When a sigma factor is associated with the core the holoenzyme is formed, which can initiate transcription.

It catalyses the reaction RNA(n) + a ribonucleoside 5'-triphosphate = RNA(n+1) + diphosphate. Functionally, DNA-dependent RNA polymerase catalyzes the transcription of DNA into RNA using the four ribonucleoside triphosphates as substrates. This chain is DNA-directed RNA polymerase subunit beta 1, found in Nocardia farcinica (strain IFM 10152).